Here is a 245-residue protein sequence, read N- to C-terminus: NAD-dependent protein deacetylase (245 aa).

Positions 1–245 (MIFVQQFEEV…EFVEGLSSRK (245 aa)) constitute a Deacetylase sirtuin-type domain. NAD(+) is bound by residues Ala26, Thr30, Phe37, Arg38, Gln105, Ile107, Asp108, and His123. Position 37 (Phe37) interacts with nicotinamide. Residues Ile107 and Asp108 each contribute to the nicotinamide site. His123 functions as the Proton acceptor in the catalytic mechanism. Zn(2+)-binding residues include Cys131, Cys134, Cys151, and Cys154. NAD(+)-binding residues include Thr190, Ser191, Asn216, and Ile234.

This sequence belongs to the sirtuin family. Class U subfamily. Zn(2+) is required as a cofactor.

It is found in the cytoplasm. The catalysed reaction is N(6)-acetyl-L-lysyl-[protein] + NAD(+) + H2O = 2''-O-acetyl-ADP-D-ribose + nicotinamide + L-lysyl-[protein]. Functionally, NAD-dependent protein deacetylase which modulates the activities of several enzymes which are inactive in their acetylated form. The protein is NAD-dependent protein deacetylase of Bacillus cereus (strain ZK / E33L).